We begin with the raw amino-acid sequence, 409 residues long: MSALGTLSGGAAGVSGLLRLRRRAAPAPAIAAPSHLPAGTVKCAAAVPDAAPIVWGRQLRPALLLPAALLPSLQPARRHTLQPPAAAAESAGEAKSVGFLEKYPALVTGFFFFMWYFLNVIFNILNKKIYNYFPYPYFVSLIHLVVGVVYCLISWSVGLPKRAPINGTLLKLLFPVALCHGIGHITSNVSFAAVAVSFAHTIKALEPFFSAAATQFILGQQVPFSLWLSLAPVVIGVSMASLTELSFNWTGFINAMISNISFTYRSIYSKKAMTDMDSTNVYAYISIIALIVCIPPALIFEGPKLMQHGFSDAIAKVGLTKFVSDLFLVGLFYHLYNQIATNTLERVAPLTHAVGNVLKRVFVIGFSIIVFGNKISTQTGIGTSIAIAGVAMYSYIKAKIEEEKRKKSA.

The N-terminal 85 residues, 1 to 85 (MSALGTLSGG…ARRHTLQPPA (85 aa)), are a transit peptide targeting the chloroplast. Topologically, residues 86 to 104 (AAAESAGEAKSVGFLEKYP) are chloroplast intermembrane. A helical membrane pass occupies residues 105 to 125 (ALVTGFFFFMWYFLNVIFNIL). Residues 126 to 137 (NKKIYNYFPYPY) are Lumenal-facing. Residues 138 to 158 (FVSLIHLVVGVVYCLISWSVG) form a helical membrane-spanning segment. Topologically, residues 159-215 (LPKRAPINGTLLKLLFPVALCHGIGHITSNVSFAAVAVSFAHTIKALEPFFSAAATQ) are chloroplast intermembrane. Residues 216 to 236 (FILGQQVPFSLWLSLAPVVIG) form a helical membrane-spanning segment. The Lumenal portion of the chain corresponds to 237–280 (VSMASLTELSFNWTGFINAMISNISFTYRSIYSKKAMTDMDSTN). A helical membrane pass occupies residues 281-300 (VYAYISIIALIVCIPPALIF). Topologically, residues 301-378 (EGPKLMQHGF…IVFGNKISTQ (78 aa)) are chloroplast intermembrane. The helical transmembrane segment at 379-399 (TGIGTSIAIAGVAMYSYIKAK) threads the bilayer. At 400–409 (IEEEKRKKSA) the chain is on the lumenal side.

This sequence belongs to the TPT transporter family. TPT (TC 2.A.7.9) subfamily. In terms of assembly, homodimer.

It localises to the plastid. Its subcellular location is the chloroplast membrane. Mediates the export of fixed carbons from the chloroplasts into the cytosol in the form of triose phosphates. In addition, it can also bind and transport phosphoenolpyruvate, thereby increasing the photosynthetic efficiency of C4-plants. This chain is Triose phosphate/phosphate translocator, chloroplastic (TPT), found in Zea mays (Maize).